Here is a 280-residue protein sequence, read N- to C-terminus: Bis(5'-nucleosyl)-tetraphosphatase, symmetrical (280 aa).

Belongs to the Ap4A hydrolase family.

It carries out the reaction P(1),P(4)-bis(5'-adenosyl) tetraphosphate + H2O = 2 ADP + 2 H(+). Its function is as follows. Hydrolyzes diadenosine 5',5'''-P1,P4-tetraphosphate to yield ADP. In Escherichia coli O17:K52:H18 (strain UMN026 / ExPEC), this protein is Bis(5'-nucleosyl)-tetraphosphatase, symmetrical.